We begin with the raw amino-acid sequence, 60 residues long: UPF0181 protein PMI1604 (60 aa).

This sequence belongs to the UPF0181 family.

The protein is UPF0181 protein PMI1604 of Proteus mirabilis (strain HI4320).